A 645-amino-acid chain; its full sequence is Beta-galactosidase (645 aa).

Arginine 102 serves as a coordination point for substrate. Cysteine 106 is a Zn(2+) binding site. Asparagine 140 serves as a coordination point for substrate. The Proton donor role is filled by glutamate 141. Zn(2+) is bound by residues cysteine 150, cysteine 152, and cysteine 155. Glutamate 312 serves as the catalytic Nucleophile. Substrate is bound by residues tryptophan 320 and 360–363; that span reads EQMH.

This sequence belongs to the glycosyl hydrolase 42 family. In terms of assembly, homotrimer.

The catalysed reaction is Hydrolysis of terminal non-reducing beta-D-galactose residues in beta-D-galactosides.. Inhibited by Cu(2+) and Fe(2+), and moderately activated by divalent cations such as Co(2+), Mn(2+) and Zn(2+). Considerably activated by dithiothreitol, beta-mercaptoethanol and cysteine. In Thermus thermophilus, this protein is Beta-galactosidase.